The primary structure comprises 216 residues: Sporamin B (216 aa).

The first 21 residues, 1–21 (MKALALLFVLSLYLLPNPAHS), serve as a signal peptide directing secretion.

The protein belongs to the protease inhibitor I3 (leguminous Kunitz-type inhibitor) family. As to expression, accumulates specifically in tuberous roots and tubers upon tuberization. Sporamin accounts 60 to 80% of the total soluble protein of the organ.

It is found in the vacuole. In terms of biological role, major tuberous root protein. This is Sporamin B (GSPO-B1) from Ipomoea batatas (Sweet potato).